Here is an 87-residue protein sequence, read N- to C-terminus: UPF0367 protein SynRCC307_0258 (87 aa).

Belongs to the UPF0367 family.

The sequence is that of UPF0367 protein SynRCC307_0258 from Synechococcus sp. (strain RCC307).